Reading from the N-terminus, the 94-residue chain is Large ribosomal subunit protein eL33 (94 aa).

Belongs to the eukaryotic ribosomal protein eL33 family.

In Aeropyrum pernix (strain ATCC 700893 / DSM 11879 / JCM 9820 / NBRC 100138 / K1), this protein is Large ribosomal subunit protein eL33.